A 700-amino-acid polypeptide reads, in one-letter code: MANLPILQFEEKIVETVEKNSVVVIIGETGSGKSTQLSQILHRHGYTKSGVIAITQPRRVAAVSVARRVAQELDVPLGEDVGYAIRFEDRTTSKTRIKYLTDGVLLRESLSNPMLDDYSVIILDEAHERSLNTDILLGLVKRLVRIRASNFKVLITSATLDGEKVSEFFSGCPVLNVPGKLYPVEILYSKERPVSYIESSLKVAIDIHVREPEGDILIFMTGQDDIEKLVSRLEEKVRSLAEGSCMDAIIYPLHGSLPPEMQVRVFSPPPPNCRRFIVSTNIAETSLTVDGVVYVIDSGYVKQRQYNPSSGMFSLDVIQISKVQANQRAGRAGRTRPGKCYRLYPLAVYRDDFLDATIPEIQRTSLAGSVLYLKSLDLPDIDILKFDFLDAPSSESLEDALKQLYFIDAIDENGAITRIGRTMSDLPLEPSLSRTLIEANETGCLSQALTVVAMLSAETTLLPARSKPSEKKRKHDEDSNLPNGSGYGDHIQLLQIFESWDRTNYDPVWCKENGMQVRGMVFVKDVRRQLCQIMQKISKDRLEVGADGRKSSSRDDYRKLRKALCVGNANQIAERMLRHNGYRTLSFQSQLVQVHPSSVLSADNDGMMPNYVVYHELISTTRPFMRNVCAVDMAWVAPIKRKIEKLNVRKLSGGPAPSFKVPEEKTELSKNNAETPAVSENVESRIEAARERFLARKGQK.

Ala2 carries the post-translational modification N-acetylalanine. The Helicase ATP-binding domain maps to 14-178; it reads VETVEKNSVV…FSGCPVLNVP (165 aa). 27-34 provides a ligand contact to ATP; sequence GETGSGKS. The DEAH box signature appears at 124–127; the sequence is DEAH. The Helicase C-terminal domain occupies 200-377; sequence SLKVAIDIHV…GSVLYLKSLD (178 aa). Disordered regions lie at residues 463–486 and 654–682; these read PARSKPSEKKRKHDEDSNLPNGSG and GPAPSFKVPEEKTELSKNNAETPAVSENV.

The protein belongs to the DEAD box helicase family. DEAH subfamily. PRP22 sub-subfamily.

The enzyme catalyses ATP + H2O = ADP + phosphate + H(+). In terms of biological role, may be involved in pre-mRNA splicing. This chain is Probable pre-mRNA-splicing factor ATP-dependent RNA helicase DEAH4, found in Arabidopsis thaliana (Mouse-ear cress).